The following is a 68-amino-acid chain: Copper transport protein ATOX1 (68 aa).

The HMA domain occupies 1–63 (MPKHEFSVDM…TLGKTGKAVS (63 aa)). The Cu cation site is built by cysteine 12 and cysteine 15. Serine 47 is subject to Phosphoserine. At lysine 60 the chain carries N6-acetyllysine.

Belongs to the ATX1 family. As to quaternary structure, homodimer. Interacts with ATP7B. Interacts with ATP7A. Interacts (via dimer form) with SLC31A1 (via C-terminal domain); this interaction improves ATOX1 stability and controls intracellular Cu(I) levels.

Its function is as follows. Binds and deliver cytosolic copper to the copper ATPase proteins. May be important in cellular antioxidant defense. The protein is Copper transport protein ATOX1 of Bos taurus (Bovine).